The following is a 617-amino-acid chain: Cytoplasmic polyadenylation element-binding protein 1 (617 aa).

The interval 1–38 (MQSQLKACGDAPAPSCSLHHRRTISKKPSNGGNSGGGG) is disordered. 2 consecutive RRM domains span residues 273 to 377 (RKVF…AWRL) and 394 to 465 (RTVF…HADT). Disordered stretches follow at residues 534–568 (DQTRILPRPPHHSTSHYHHRSTPSHHHNHTHQNVT) and 592–617 (NQNNNSANSTPPQMKQFSAIPTAIGY). A compositionally biased stretch (basic residues) spans 542–563 (PPHHSTSHYHHRSTPSHHHNHT).

In terms of assembly, interacts with fbf-1.

Cytoplasmic polyadenylation element binding protein that binds to and regulates the translation of specific mRNAs. Essential for progression through meiosis. Involved in spermatogenesis. The protein is Cytoplasmic polyadenylation element-binding protein 1 (cpb-1) of Caenorhabditis japonica.